The sequence spans 86 residues: Sulmotoxin 2 (86 aa).

An N-terminal signal peptide occupies residues 1 to 21 (MKTLLLALAVVAFMCLDSVYP). 5 cysteine pairs are disulfide-bonded: Cys24–Cys47, Cys27–Cys35, Cys41–Cys62, Cys66–Cys77, and Cys78–Cys83.

The protein belongs to the three-finger toxin family. Ancestral subfamily. Boigatoxin sub-subfamily. As to quaternary structure, monomer. In terms of tissue distribution, expressed by the venom gland.

The protein resides in the secreted. Its function is as follows. Probable neurotoxin. Is not toxic to mice and geckos. The chain is Sulmotoxin 2 from Spilotes sulphureus (Amazon puffing snake).